The following is a 74-amino-acid chain: Antimicrobial peptide 1 (74 aa).

A signal peptide spans 1 to 22 (MEIKYLLTVFLVLLIGSDYCQA). A Lysine amide modification is found at lysine 40. Positions 46–74 (DLDGQIDRSRNFRKRDAELEELLSKLPIY) are excised as a propeptide.

As to expression, expressed by the venom gland.

The protein resides in the secreted. It is found in the target cell membrane. Has antibacterial activity against the Gram-positive bacteria S.aureus (MIC=20 uM), the Gram-negative bacteria E.coli (MIC=150 uM), and the yeast C.albicans (MIC=64 uM). Causes hemolysis on horse erythrocytes. The sequence is that of Antimicrobial peptide 1 from Androctonus amoreuxi (African fattail scorpion).